The primary structure comprises 91 residues: Small ribosomal subunit protein bS18 (91 aa).

It belongs to the bacterial ribosomal protein bS18 family. In terms of assembly, part of the 30S ribosomal subunit. Forms a tight heterodimer with protein bS6.

In terms of biological role, binds as a heterodimer with protein bS6 to the central domain of the 16S rRNA, where it helps stabilize the platform of the 30S subunit. This is Small ribosomal subunit protein bS18 from Burkholderia ambifaria (strain MC40-6).